The chain runs to 159 residues: Ribosomal RNA large subunit methyltransferase H (159 aa).

S-adenosyl-L-methionine is bound by residues L76, G108, and 127–132; that span reads FGLLTL.

The protein belongs to the RNA methyltransferase RlmH family. In terms of assembly, homodimer.

The protein resides in the cytoplasm. It catalyses the reaction pseudouridine(1915) in 23S rRNA + S-adenosyl-L-methionine = N(3)-methylpseudouridine(1915) in 23S rRNA + S-adenosyl-L-homocysteine + H(+). Specifically methylates the pseudouridine at position 1915 (m3Psi1915) in 23S rRNA. The protein is Ribosomal RNA large subunit methyltransferase H of Streptococcus equi subsp. zooepidemicus (strain H70).